The sequence spans 110 residues: Putative protein RIG (110 aa).

In terms of tissue distribution, expressed predominantly in brain and weakly in heart and lung. Expression is reduced or undetectable in cultured glioma cells, primary glioblastoma cells and malignant glioblastoma tumors.

May serve as a molecular marker for or play a role in the malignant progression of glioblastomas. This is Putative protein RIG (RIG) from Homo sapiens (Human).